The sequence spans 296 residues: MAWIQLRLNSTNEKAEKISEYLEEIGAVSVTFMDSQDTPIFEPLPGETRLWGNTDVIALFDAKTNMQQIVRLLQQKNHLDENTAYKIEQIEDKDWEREWMDNFHPMKFGKRLWICPSWREIPDENAINVMLDPGLAFGTGTHPTTALCLEWLDSLDLTGKTVIDFGCGSGILAIAALKLGAKSAVGIDIDPQAILASYNNAEQNGVAERLQLFLSEEKPTDLQADVVIANILAGPLKELYPIISNLVKPQGDLGLSGILSTQADSVCEAYQGKFTLDPITEREEWCRITGKLNSFV.

Residues T145, G166, D188, and N230 each contribute to the S-adenosyl-L-methionine site.

This sequence belongs to the methyltransferase superfamily. PrmA family.

The protein localises to the cytoplasm. The enzyme catalyses L-lysyl-[protein] + 3 S-adenosyl-L-methionine = N(6),N(6),N(6)-trimethyl-L-lysyl-[protein] + 3 S-adenosyl-L-homocysteine + 3 H(+). Methylates ribosomal protein L11. The sequence is that of Ribosomal protein L11 methyltransferase from Histophilus somni (strain 2336) (Haemophilus somnus).